Reading from the N-terminus, the 140-residue chain is Small ribosomal subunit protein uS12 (140 aa).

A 3-methylthioaspartic acid modification is found at aspartate 102.

The protein belongs to the universal ribosomal protein uS12 family. Part of the 30S ribosomal subunit. Contacts proteins S8 and S17. May interact with IF1 in the 30S initiation complex.

With S4 and S5 plays an important role in translational accuracy. Functionally, interacts with and stabilizes bases of the 16S rRNA that are involved in tRNA selection in the A site and with the mRNA backbone. Located at the interface of the 30S and 50S subunits, it traverses the body of the 30S subunit contacting proteins on the other side and probably holding the rRNA structure together. The combined cluster of proteins S8, S12 and S17 appears to hold together the shoulder and platform of the 30S subunit. This chain is Small ribosomal subunit protein uS12, found in Bacillus anthracis (strain A0248).